Here is a 158-residue protein sequence, read N- to C-terminus: Dysbindin domain-containing protein 1 (158 aa).

The interval 1-38 is disordered; sequence MEPSEGASPGGLVKEVDMPQAALSAPVPVTGTSGQSPM. Residues serine 95 and serine 119 each carry the phosphoserine modification. The disordered stretch occupies residues 96–158; it reads DDENVASDSH…ILTVERPKED (63 aa). Positions 125-141 are enriched in basic and acidic residues; that stretch reads TRAEQNREKQPFGDPER.

It belongs to the dysbindin family.

This is Dysbindin domain-containing protein 1 (DBNDD1) from Bos taurus (Bovine).